The sequence spans 282 residues: MTDRYAVFGNPISHSKSPFIHGQFAAPTQESLTYEAILAPVDGFEASLTAFFNAGGKGANVTVPFKEQAFALCDSISPEAKLAGAVNTLSLLADGTIRGDNTDGLGLVADLIANLGSLQDQRVLLIGAGGAARGCILPLLNAGIAQLTISNRTHTKAQLLVDIFTSVDNGAYVSKVTAVEMSELAGEFDIIINSTSASLAGELPPLPAHIITTQTVCYDMMYGASVTAFNQWALSQGAAKVIDGLGMLVGQAAKSFTLWRGIEPDTQVVLTLLRDKLMAEPK.

Residues 15 to 17 and Thr-62 contribute to the shikimate site; that span reads SKS. The active-site Proton acceptor is the Lys-66. Shikimate-binding residues include Asn-87 and Asp-103. Residues 127–131, 151–156, and Met-220 each bind NADP(+); these read GAGGA and NRTHTK. Residue Tyr-222 coordinates shikimate. Gly-244 serves as a coordination point for NADP(+).

Belongs to the shikimate dehydrogenase family. As to quaternary structure, homodimer.

It catalyses the reaction shikimate + NADP(+) = 3-dehydroshikimate + NADPH + H(+). The protein operates within metabolic intermediate biosynthesis; chorismate biosynthesis; chorismate from D-erythrose 4-phosphate and phosphoenolpyruvate: step 4/7. Its function is as follows. Involved in the biosynthesis of the chorismate, which leads to the biosynthesis of aromatic amino acids. Catalyzes the reversible NADPH linked reduction of 3-dehydroshikimate (DHSA) to yield shikimate (SA). This Shewanella baltica (strain OS185) protein is Shikimate dehydrogenase (NADP(+)).